A 198-amino-acid chain; its full sequence is Holliday junction branch migration complex subunit RuvA (198 aa).

A domain I region spans residues 1 to 64; the sequence is MYEYIKGEYM…EDFIGLYGFE (64 aa). Positions 65–143 are domain II; the sequence is SLEELDMFKL…SDELLNCIDE (79 aa). The flexible linker stretch occupies residues 144–154; that stretch reads FDDVTQDNSLA. Residues 154–198 are domain III; that stretch reads ALSEALSALISLGYTEKEAEKVLKDVDKSESVENIIKSALVKLMG.

This sequence belongs to the RuvA family. Homotetramer. Forms an RuvA(8)-RuvB(12)-Holliday junction (HJ) complex. HJ DNA is sandwiched between 2 RuvA tetramers; dsDNA enters through RuvA and exits via RuvB. An RuvB hexamer assembles on each DNA strand where it exits the tetramer. Each RuvB hexamer is contacted by two RuvA subunits (via domain III) on 2 adjacent RuvB subunits; this complex drives branch migration. In the full resolvosome a probable DNA-RuvA(4)-RuvB(12)-RuvC(2) complex forms which resolves the HJ.

It is found in the cytoplasm. The RuvA-RuvB-RuvC complex processes Holliday junction (HJ) DNA during genetic recombination and DNA repair, while the RuvA-RuvB complex plays an important role in the rescue of blocked DNA replication forks via replication fork reversal (RFR). RuvA specifically binds to HJ cruciform DNA, conferring on it an open structure. The RuvB hexamer acts as an ATP-dependent pump, pulling dsDNA into and through the RuvAB complex. HJ branch migration allows RuvC to scan DNA until it finds its consensus sequence, where it cleaves and resolves the cruciform DNA. The chain is Holliday junction branch migration complex subunit RuvA from Clostridium botulinum (strain Alaska E43 / Type E3).